We begin with the raw amino-acid sequence, 37 residues long: Large ribosomal subunit protein bL36 (37 aa).

This sequence belongs to the bacterial ribosomal protein bL36 family.

The polypeptide is Large ribosomal subunit protein bL36 (Idiomarina loihiensis (strain ATCC BAA-735 / DSM 15497 / L2-TR)).